Consider the following 230-residue polypeptide: Cytochrome c oxidase subunit 2 (230 aa).

The Mitochondrial intermembrane segment spans residues 1-14 (MAHPTQLGFQDAAS). Residues 15–45 (PVMEELLHFHDHALMIVFLISTLVLYIIIAM) traverse the membrane as a helical segment. Residues 46–59 (VSTKLTNKYILDSQ) are Mitochondrial matrix-facing. The chain crosses the membrane as a helical span at residues 60 to 87 (EIEIVWTILPAVILVLIALPSLRILYLM). The Mitochondrial intermembrane segment spans residues 88–230 (DEINDPHLTI…NWSSLMLEDA (143 aa)). 6 residues coordinate Cu cation: histidine 161, cysteine 196, glutamate 198, cysteine 200, histidine 204, and methionine 207. Residue glutamate 198 coordinates Mg(2+).

The protein belongs to the cytochrome c oxidase subunit 2 family. In terms of assembly, component of the cytochrome c oxidase (complex IV, CIV), a multisubunit enzyme composed of 14 subunits. The complex is composed of a catalytic core of 3 subunits MT-CO1, MT-CO2 and MT-CO3, encoded in the mitochondrial DNA, and 11 supernumerary subunits COX4I, COX5A, COX5B, COX6A, COX6B, COX6C, COX7A, COX7B, COX7C, COX8 and NDUFA4, which are encoded in the nuclear genome. The complex exists as a monomer or a dimer and forms supercomplexes (SCs) in the inner mitochondrial membrane with NADH-ubiquinone oxidoreductase (complex I, CI) and ubiquinol-cytochrome c oxidoreductase (cytochrome b-c1 complex, complex III, CIII), resulting in different assemblies (supercomplex SCI(1)III(2)IV(1) and megacomplex MCI(2)III(2)IV(2)). Found in a complex with TMEM177, COA6, COX18, COX20, SCO1 and SCO2. Interacts with TMEM177 in a COX20-dependent manner. Interacts with COX20. Interacts with COX16. It depends on Cu cation as a cofactor.

The protein localises to the mitochondrion inner membrane. The enzyme catalyses 4 Fe(II)-[cytochrome c] + O2 + 8 H(+)(in) = 4 Fe(III)-[cytochrome c] + 2 H2O + 4 H(+)(out). Its function is as follows. Component of the cytochrome c oxidase, the last enzyme in the mitochondrial electron transport chain which drives oxidative phosphorylation. The respiratory chain contains 3 multisubunit complexes succinate dehydrogenase (complex II, CII), ubiquinol-cytochrome c oxidoreductase (cytochrome b-c1 complex, complex III, CIII) and cytochrome c oxidase (complex IV, CIV), that cooperate to transfer electrons derived from NADH and succinate to molecular oxygen, creating an electrochemical gradient over the inner membrane that drives transmembrane transport and the ATP synthase. Cytochrome c oxidase is the component of the respiratory chain that catalyzes the reduction of oxygen to water. Electrons originating from reduced cytochrome c in the intermembrane space (IMS) are transferred via the dinuclear copper A center (CU(A)) of subunit 2 and heme A of subunit 1 to the active site in subunit 1, a binuclear center (BNC) formed by heme A3 and copper B (CU(B)). The BNC reduces molecular oxygen to 2 water molecules using 4 electrons from cytochrome c in the IMS and 4 protons from the mitochondrial matrix. The polypeptide is Cytochrome c oxidase subunit 2 (mt-co2) (Carassius auratus (Goldfish)).